Reading from the N-terminus, the 296-residue chain is MKDKLVKAIAKDGQVRIIGAITTELVNEGVKLHNCAPTAAAALGRMLTAGALMGTTLKSGKDTLTLQIHGGGIAKGVVVTSYADGHVKGYIGNPTADIDPNSKGKLDVSGIIGKNGNLLVIRDMGLKEPYIGQVPIYTGEIGEDLAYYYTVSEQTPSAVGLGVLVDKDLSIKSAGGFIIQMMPGADEMLADLISYRLEEIPSITEMISKGMTIEEILEYIFEDMDLKILESIAPEYRCDCSREKVERAFASIGQKDLKEIYDEGKEEELKCHFCNKAYAFSHDEVGDILESYYSEK.

2 cysteine pairs are disulfide-bonded: Cys238-Cys240 and Cys271-Cys274.

It belongs to the HSP33 family. Under oxidizing conditions two disulfide bonds are formed involving the reactive cysteines. Under reducing conditions zinc is bound to the reactive cysteines and the protein is inactive.

Its subcellular location is the cytoplasm. In terms of biological role, redox regulated molecular chaperone. Protects both thermally unfolding and oxidatively damaged proteins from irreversible aggregation. Plays an important role in the bacterial defense system toward oxidative stress. This Clostridium botulinum (strain Loch Maree / Type A3) protein is 33 kDa chaperonin.